A 2131-amino-acid polypeptide reads, in one-letter code: Protein Ycf2 (2131 aa).

Gly-1466–Ser-1473 provides a ligand contact to ATP.

This sequence belongs to the Ycf2 family.

It localises to the plastid. Its subcellular location is the chloroplast stroma. Its function is as follows. Probable ATPase of unknown function. Its presence in a non-photosynthetic plant (Epifagus virginiana) and experiments in tobacco indicate that it has an essential function which is probably not related to photosynthesis. The chain is Protein Ycf2 from Helianthus annuus (Common sunflower).